A 394-amino-acid polypeptide reads, in one-letter code: NAD(P)H-quinone oxidoreductase subunit H (394 aa).

The protein belongs to the complex I 49 kDa subunit family. In terms of assembly, NDH-1 can be composed of about 15 different subunits; different subcomplexes with different compositions have been identified which probably have different functions.

Its subcellular location is the cellular thylakoid membrane. The catalysed reaction is a plastoquinone + NADH + (n+1) H(+)(in) = a plastoquinol + NAD(+) + n H(+)(out). It carries out the reaction a plastoquinone + NADPH + (n+1) H(+)(in) = a plastoquinol + NADP(+) + n H(+)(out). In terms of biological role, NDH-1 shuttles electrons from an unknown electron donor, via FMN and iron-sulfur (Fe-S) centers, to quinones in the respiratory and/or the photosynthetic chain. The immediate electron acceptor for the enzyme in this species is believed to be plastoquinone. Couples the redox reaction to proton translocation, and thus conserves the redox energy in a proton gradient. Cyanobacterial NDH-1 also plays a role in inorganic carbon-concentration. The chain is NAD(P)H-quinone oxidoreductase subunit H from Synechococcus sp. (strain CC9605).